A 424-amino-acid polypeptide reads, in one-letter code: MDMPPTPLPPETANTSPAPNGATAGIRVENCYVFKSRLQEYAQKTGLQTPEYHTFKEGPSHEPVFKSTVVINNTSYDSLPGFFNRKAAEQSAAEVALMEIVKSIPANANIPAVQETGLCKNLLQEYAQKMNYAIPSYICTKSASGLAPFICTVEIGGIQYIGAAARTKKDAEIKAARTALLAIQGQSEGSANGATKYIVVPGKRVGKEVEKRPIETPKPLKVKKGGFKKKWNKRKFMKKDGQAVDVEKDEARVAGDAHDSDVLMQPTVITQEASCGTLFLQPCEEAKRVEAEPPRDIEMVQPDKENQHSDAALVQPDDEARVEQEPSRDISVVQPNEEAISGKQEPSIDAAILQPKEEASSVKQEPFIDTAMLQACKEAGSVELGPARDTVISQLNEQDRAVKQEPAGDIVVPQPDVHARVVKE.

Residues 1 to 10 (MDMPPTPLPP) show a composition bias toward pro residues. The segment at 1–22 (MDMPPTPLPPETANTSPAPNGA) is disordered. DRBM domains lie at 33–102 (VFKS…EIVK) and 118–185 (LCKN…AIQG). Basic and acidic residues-rich tracts occupy residues 287-308 (KRVE…ENQH) and 318-328 (DEARVEQEPSR). The tract at residues 287-330 (KRVEAEPPRDIEMVQPDKENQHSDAALVQPDDEARVEQEPSRDI) is disordered.

Binds double-stranded RNA. In Oryza sativa subsp. japonica (Rice), this protein is Double-stranded RNA-binding protein 8 (DRB8).